Reading from the N-terminus, the 326-residue chain is Sporulation-specific wall maturation protein (326 aa).

The first 18 residues, Met-1–Ala-18, serve as a signal peptide directing secretion. In terms of domain architecture, Asparaginase/glutaminase spans Thr-19 to Ser-324. N-linked (GlcNAc...) asparagine glycosylation is found at Asn-26, Asn-50, Asn-58, Asn-64, Asn-76, Asn-108, Asn-181, Asn-190, Asn-199, Asn-205, Asn-248, and Asn-281.

To yeast YGP1.

Serves a protective function during the early stages of spore wall formation, and contributes to spore wall maturation. The sequence is that of Sporulation-specific wall maturation protein (SPS100) from Saccharomyces cerevisiae (strain ATCC 204508 / S288c) (Baker's yeast).